The sequence spans 450 residues: MGSMEASTAPENGTAAAAAAAASTACNGAGGGGGAAAASNGGGVERRLRSSAASASWASHLPLEVGTRVMCRWRDQKLHPVKVIERRKSSTSSSPADYEYYVHYTEFNRRLDEWVKLEQLDLETVETDVDEKVEDKATSLKMTRHQKRKIDETHVEQGHEELDAASLREHEEFTKVKNIAKIELGRYEIDTWYFSPFPPEYNDSPKLFFCEFCLNFMKRKEQLQRHMKKCDLKHPPGDEIYRSGTLSMFEVDGKKNKVYGQNLCYLAKLFLDHKTLYYDVDLFLFYVLCECDDRGCHMVGYFSKEKHSEESYNLACILTLPPYQRKGYGKFLIAFSYELSKKEGKVGTPERPLSDLGLLSYRGYWTRVLLEILKKHKSNISIKELSDMTAIKADDILSTLQSLDLIQYRKGQHVICADPKVLDRHLKAAGRGGLEVDVSKLIWTPYKEQG.

The Tudor-knot domain maps to 63-122; the sequence is LEVGTRVMCRWRDQKLHPVKVIERRKSSTSSSPADYEYYVHYTEFNRRLDEWVKLEQLDL. In terms of domain architecture, MYST-type HAT spans 174–445; that stretch reads TKVKNIAKIE…VDVSKLIWTP (272 aa). The segment at 207 to 232 adopts a C2HC MYST-type zinc-finger fold; it reads LFFCEFCLNFMKRKEQLQRHMKKCDL. An N6-acetyllysine; by autocatalysis modification is found at Lys-274. Residues 317 to 319 and 324 to 330 contribute to the acetyl-CoA site; these read ILT and QRKGYGK. Glu-350 serves as the catalytic Proton donor/acceptor. Acetyl-CoA is bound at residue Ser-354.

The protein belongs to the MYST (SAS/MOZ) family. Autoacetylation at Lys-274 is required for proper function.

The protein resides in the nucleus. It carries out the reaction L-lysyl-[protein] + acetyl-CoA = N(6)-acetyl-L-lysyl-[protein] + CoA + H(+). Histone acetyltransferase which may be involved in transcriptional activation. The sequence is that of Putative MYST-like histone acetyltransferase 1 from Oryza sativa subsp. japonica (Rice).